The following is a 173-amino-acid chain: HTH-type transcriptional regulator IscR (173 aa).

An HTH rrf2-type domain is found at 2-131 (RLTSKGRYAV…NNITLGELMM (130 aa)). The H-T-H motif DNA-binding region spans 28–51 (LADISERQGISLSYLEQLFSKLRK). Positions 92, 98, and 104 each coordinate [2Fe-2S] cluster.

Requires [2Fe-2S] cluster as cofactor.

Functionally, regulates the transcription of several operons and genes involved in the biogenesis of Fe-S clusters and Fe-S-containing proteins. This chain is HTH-type transcriptional regulator IscR, found in Vibrio cholerae serotype O1 (strain ATCC 39315 / El Tor Inaba N16961).